A 232-amino-acid polypeptide reads, in one-letter code: Nucleolar protein 16 (232 aa).

Residues 1–14 (MGRELQKRKKRSSR) are compositionally biased toward basic residues. 2 disordered regions span residues 1-20 (MGRE…VQTH) and 113-161 (RSDN…QSSR). Over residues 132 to 154 (EEPKPKNPTHDIEWHGISDDRQE) the composition is skewed to basic and acidic residues.

This sequence belongs to the NOP16 family. In terms of assembly, component of the pre-66S ribosomal particle.

The protein localises to the nucleus. It is found in the nucleolus. Its function is as follows. Involved in the biogenesis of the 60S ribosomal subunit. This is Nucleolar protein 16 (nop-16) from Neurospora crassa (strain ATCC 24698 / 74-OR23-1A / CBS 708.71 / DSM 1257 / FGSC 987).